The following is a 58-amino-acid chain: uncharacterized protein (58 aa).

A helical transmembrane segment spans residues 18-38 (WLMIVLLFCSTGMVFLATILE).

The protein resides in the membrane. This is an uncharacterized protein from Saccharomyces cerevisiae (strain ATCC 204508 / S288c) (Baker's yeast).